The primary structure comprises 336 residues: Biotin synthase (336 aa).

The Radical SAM core domain maps to Asn54–Arg281. Cys69, Cys73, and Cys76 together coordinate [4Fe-4S] cluster. [2Fe-2S] cluster-binding residues include Cys113, Cys144, Cys204, and Arg276.

The protein belongs to the radical SAM superfamily. Biotin synthase family. Homodimer. [4Fe-4S] cluster is required as a cofactor. It depends on [2Fe-2S] cluster as a cofactor.

The catalysed reaction is (4R,5S)-dethiobiotin + (sulfur carrier)-SH + 2 reduced [2Fe-2S]-[ferredoxin] + 2 S-adenosyl-L-methionine = (sulfur carrier)-H + biotin + 2 5'-deoxyadenosine + 2 L-methionine + 2 oxidized [2Fe-2S]-[ferredoxin]. It functions in the pathway cofactor biosynthesis; biotin biosynthesis; biotin from 7,8-diaminononanoate: step 2/2. Catalyzes the conversion of dethiobiotin (DTB) to biotin by the insertion of a sulfur atom into dethiobiotin via a radical-based mechanism. This Burkholderia pseudomallei (strain 1106a) protein is Biotin synthase.